A 64-amino-acid chain; its full sequence is Large ribosomal subunit protein uL29 (64 aa).

The protein belongs to the universal ribosomal protein uL29 family.

This chain is Large ribosomal subunit protein uL29, found in Coprothermobacter proteolyticus (strain ATCC 35245 / DSM 5265 / OCM 4 / BT).